The primary structure comprises 285 residues: Phosphatidylserine decarboxylase proenzyme (285 aa).

Residues aspartate 96, histidine 152, and serine 250 each act as charge relay system; for autoendoproteolytic cleavage activity in the active site. Residue serine 250 is the Schiff-base intermediate with substrate; via pyruvic acid; for decarboxylase activity of the active site. Serine 250 carries the pyruvic acid (Ser); by autocatalysis modification.

The protein belongs to the phosphatidylserine decarboxylase family. PSD-B subfamily. Prokaryotic type I sub-subfamily. In terms of assembly, heterodimer of a large membrane-associated beta subunit and a small pyruvoyl-containing alpha subunit. Pyruvate serves as cofactor. Is synthesized initially as an inactive proenzyme. Formation of the active enzyme involves a self-maturation process in which the active site pyruvoyl group is generated from an internal serine residue via an autocatalytic post-translational modification. Two non-identical subunits are generated from the proenzyme in this reaction, and the pyruvate is formed at the N-terminus of the alpha chain, which is derived from the carboxyl end of the proenzyme. The autoendoproteolytic cleavage occurs by a canonical serine protease mechanism, in which the side chain hydroxyl group of the serine supplies its oxygen atom to form the C-terminus of the beta chain, while the remainder of the serine residue undergoes an oxidative deamination to produce ammonia and the pyruvoyl prosthetic group on the alpha chain. During this reaction, the Ser that is part of the protease active site of the proenzyme becomes the pyruvoyl prosthetic group, which constitutes an essential element of the active site of the mature decarboxylase.

It is found in the cell membrane. It carries out the reaction a 1,2-diacyl-sn-glycero-3-phospho-L-serine + H(+) = a 1,2-diacyl-sn-glycero-3-phosphoethanolamine + CO2. Its pathway is phospholipid metabolism; phosphatidylethanolamine biosynthesis; phosphatidylethanolamine from CDP-diacylglycerol: step 2/2. In terms of biological role, catalyzes the formation of phosphatidylethanolamine (PtdEtn) from phosphatidylserine (PtdSer). In Acinetobacter baylyi (strain ATCC 33305 / BD413 / ADP1), this protein is Phosphatidylserine decarboxylase proenzyme.